A 161-amino-acid polypeptide reads, in one-letter code: GTP-dependent dephospho-CoA kinase (161 aa).

Residues D37, I38, D56, K58, E112, and D135 each coordinate GTP.

It belongs to the GTP-dependent DPCK family.

The catalysed reaction is 3'-dephospho-CoA + GTP = GDP + CoA + H(+). It functions in the pathway cofactor biosynthesis; coenzyme A biosynthesis. Its function is as follows. Catalyzes the GTP-dependent phosphorylation of the 3'-hydroxyl group of dephosphocoenzyme A to form coenzyme A (CoA). The polypeptide is GTP-dependent dephospho-CoA kinase (Methanococcus aeolicus (strain ATCC BAA-1280 / DSM 17508 / OCM 812 / Nankai-3)).